The following is a 262-amino-acid chain: Indole-3-glycerol phosphate synthase (262 aa).

Belongs to the TrpC family.

The enzyme catalyses 1-(2-carboxyphenylamino)-1-deoxy-D-ribulose 5-phosphate + H(+) = (1S,2R)-1-C-(indol-3-yl)glycerol 3-phosphate + CO2 + H2O. It participates in amino-acid biosynthesis; L-tryptophan biosynthesis; L-tryptophan from chorismate: step 4/5. This Bordetella bronchiseptica (strain ATCC BAA-588 / NCTC 13252 / RB50) (Alcaligenes bronchisepticus) protein is Indole-3-glycerol phosphate synthase.